Reading from the N-terminus, the 125-residue chain is Ribosome-binding factor A (125 aa).

It belongs to the RbfA family. In terms of assembly, monomer. Binds 30S ribosomal subunits, but not 50S ribosomal subunits or 70S ribosomes.

It is found in the cytoplasm. In terms of biological role, one of several proteins that assist in the late maturation steps of the functional core of the 30S ribosomal subunit. Associates with free 30S ribosomal subunits (but not with 30S subunits that are part of 70S ribosomes or polysomes). Required for efficient processing of 16S rRNA. May interact with the 5'-terminal helix region of 16S rRNA. In Chloroherpeton thalassium (strain ATCC 35110 / GB-78), this protein is Ribosome-binding factor A.